Here is an 82-residue protein sequence, read N- to C-terminus: Neuropeptide-like peptide 36 (82 aa).

This Caenorhabditis elegans protein is Neuropeptide-like peptide 36 (nlp-36).